The primary structure comprises 88 residues: MVKLRLKRCGRKQRAVYRIVAIDVRSRREGRDLRKVGFYDPINNQTYLNVPAILYFLEKGAQPTATVHDILKKAGVFTELTLNQTKFT.

It belongs to the bacterial ribosomal protein bS16 family.

The protein localises to the plastid. Its subcellular location is the chloroplast. The sequence is that of Small ribosomal subunit protein bS16c from Gossypium hirsutum (Upland cotton).